A 598-amino-acid polypeptide reads, in one-letter code: UvrABC system protein C (598 aa).

In terms of domain architecture, GIY-YIG spans 14 to 91 (DSPGCYLHKD…IQKNMPKYNI (78 aa)). The 36-residue stretch at 196–231 (DKIIEDLRSKMLAASEEMAFERAAEYRDLISGIATM) folds into the UVR domain.

It belongs to the UvrC family. Interacts with UvrB in an incision complex.

Its subcellular location is the cytoplasm. The UvrABC repair system catalyzes the recognition and processing of DNA lesions. UvrC both incises the 5' and 3' sides of the lesion. The N-terminal half is responsible for the 3' incision and the C-terminal half is responsible for the 5' incision. This chain is UvrABC system protein C, found in Streptococcus pyogenes serotype M5 (strain Manfredo).